Consider the following 241-residue polypeptide: Penton protein H240R (241 aa).

This sequence belongs to the asfivirus H240R family.

It is found in the virion. Functionally, forms the penton at the fivefold vertices of the icosahedral capsid. Together with the minor capsid proteins (p17, p49, and M1249L), forms a complicated network immediately below the outer capsid shell, stabilizing the whole capsid. This chain is Penton protein H240R, found in African swine fever virus (isolate Tick/Malawi/Lil 20-1/1983) (ASFV).